Reading from the N-terminus, the 227-residue chain is Cytidylate kinase (227 aa).

An ATP-binding site is contributed by 12 to 20 (GPSGAGKGT).

It belongs to the cytidylate kinase family. Type 1 subfamily.

The protein resides in the cytoplasm. It catalyses the reaction CMP + ATP = CDP + ADP. The enzyme catalyses dCMP + ATP = dCDP + ADP. The protein is Cytidylate kinase of Photorhabdus laumondii subsp. laumondii (strain DSM 15139 / CIP 105565 / TT01) (Photorhabdus luminescens subsp. laumondii).